The primary structure comprises 118 residues: MTAKVLKRKIALRIKRKRRIRGKISGVATCPRVSIFKSNRTLYVQAIDDVTATTLAAVDGRKLGIKANKEGAVTLAKEFAKALKAKKIDVAIFDRNGYLYHGVIAAFAEALRENGIKL.

This sequence belongs to the universal ribosomal protein uL18 family. In terms of assembly, part of the 50S ribosomal subunit; part of the 5S rRNA/L5/L18/L25 subcomplex. Contacts the 5S and 23S rRNAs.

In terms of biological role, this is one of the proteins that bind and probably mediate the attachment of the 5S RNA into the large ribosomal subunit, where it forms part of the central protuberance. This is Large ribosomal subunit protein uL18 from Campylobacter concisus (strain 13826).